A 467-amino-acid chain; its full sequence is Probable endopeptidase p60 (467 aa).

The first 27 residues, 1–27 (MNMKKATIAATAGIAVTAFAAPTIASA), serve as a signal peptide directing secretion. Positions 28–71 (STVVVEAGDTLWGIAQSKGTTVDAIKKANNLTTDKIVPGQKLQV) constitute a LysM 1 domain. In terms of domain architecture, SH3b spans 79–143 (KAEKSVSATW…VNGKYLTDKA (65 aa)). 2 disordered regions span residues 154–199 (KKET…QNAT) and 247–348 (KTVA…GSTN). Residues 172-185 (KQPTTQQTAPAPKA) show a composition bias toward low complexity. A LysM 2 domain is found at 199–242 (TTHNVKSGDTIWALSVKYGVSVQDIMSWNNLSSSSIYVGQKLAI). The segment covering 288 to 348 (TEQQTTTKAP…NTNTNQGSTN (61 aa)) has biased composition (low complexity). A 7 X 2 AA tandem repeats of T-N region spans residues 330-343 (TNTNTNTNTNTNTN). Residues 349-467 (NASASALIAE…GKFLVGFGRV (119 aa)) form the NlpC/P60 domain. The Nucleophile role is filled by Cys-379. The Proton acceptor role is filled by His-429. The active site involves Asn-441.

The protein belongs to the peptidase C40 family.

This major extracellular protein may be involved in the invasion of non-professional phagocytic cells by Listeria. This Listeria innocua serovar 6a (strain ATCC BAA-680 / CLIP 11262) protein is Probable endopeptidase p60 (iap).